We begin with the raw amino-acid sequence, 216 residues long: Octanoyltransferase (216 aa).

The region spanning 33 to 216 (AQTADELWIV…AEKLTRHLSG (184 aa)) is the BPL/LPL catalytic domain. Substrate-binding positions include 72 to 79 (RGGEVTYH), 148 to 150 (ALG), and 162 to 164 (GVS). Cys-180 functions as the Acyl-thioester intermediate in the catalytic mechanism.

It belongs to the LipB family.

The protein resides in the cytoplasm. It catalyses the reaction octanoyl-[ACP] + L-lysyl-[protein] = N(6)-octanoyl-L-lysyl-[protein] + holo-[ACP] + H(+). It functions in the pathway protein modification; protein lipoylation via endogenous pathway; protein N(6)-(lipoyl)lysine from octanoyl-[acyl-carrier-protein]: step 1/2. Its function is as follows. Catalyzes the transfer of endogenously produced octanoic acid from octanoyl-acyl-carrier-protein onto the lipoyl domains of lipoate-dependent enzymes. Lipoyl-ACP can also act as a substrate although octanoyl-ACP is likely to be the physiological substrate. This chain is Octanoyltransferase, found in Herminiimonas arsenicoxydans.